Consider the following 446-residue polypeptide: GTPase Der (446 aa).

2 EngA-type G domains span residues 3 to 168 and 181 to 354; these read PVIA…YAGQ and IKIA…KAAM. Residues 9-16, 57-61, 120-123, 187-194, 234-238, and 299-302 each bind GTP; these read GRPNVGKS, DTGGF, NKAE, DTAGL, and NKWD. One can recognise a KH-like domain in the interval 355 to 439; it reads SKLPTPKLTR…PLRIEFRSST (85 aa).

This sequence belongs to the TRAFAC class TrmE-Era-EngA-EngB-Septin-like GTPase superfamily. EngA (Der) GTPase family. In terms of assembly, associates with the 50S ribosomal subunit.

In terms of biological role, GTPase that plays an essential role in the late steps of ribosome biogenesis. This is GTPase Der from Paraburkholderia phymatum (strain DSM 17167 / CIP 108236 / LMG 21445 / STM815) (Burkholderia phymatum).